Reading from the N-terminus, the 1200-residue chain is Chromosome partition protein Smc (1200 aa).

Position 33 to 40 (33 to 40 (PNGSGKSN)) interacts with ATP. The tract at residues 90-109 (GENLSEPGANHNGNGNGAKI) is disordered. The stretch at 202-528 (EVQDREERCQ…AASQAQQEVQ (327 aa)) forms a coiled coil. One can recognise an SMC hinge domain in the interval 542–656 (PGVCGLVAQL…VFDTLVNARN (115 aa)). The stretch at 692–1046 (TMVSEDTAEV…ERTELLLRIE (355 aa)) forms a coiled coil.

This sequence belongs to the SMC family. In terms of assembly, homodimer.

Its subcellular location is the cytoplasm. In terms of biological role, required for chromosome condensation and partitioning. This is Chromosome partition protein Smc from Synechocystis sp. (strain ATCC 27184 / PCC 6803 / Kazusa).